A 518-amino-acid chain; its full sequence is Bifunctional purine biosynthesis protein PurH (518 aa).

The 146-residue stretch at 1–146 (MGRMALLSTS…KNHAHVTVLV (146 aa)) folds into the MGS-like domain.

It belongs to the PurH family.

It catalyses the reaction (6R)-10-formyltetrahydrofolate + 5-amino-1-(5-phospho-beta-D-ribosyl)imidazole-4-carboxamide = 5-formamido-1-(5-phospho-D-ribosyl)imidazole-4-carboxamide + (6S)-5,6,7,8-tetrahydrofolate. The catalysed reaction is IMP + H2O = 5-formamido-1-(5-phospho-D-ribosyl)imidazole-4-carboxamide. The protein operates within purine metabolism; IMP biosynthesis via de novo pathway; 5-formamido-1-(5-phospho-D-ribosyl)imidazole-4-carboxamide from 5-amino-1-(5-phospho-D-ribosyl)imidazole-4-carboxamide (10-formyl THF route): step 1/1. Its pathway is purine metabolism; IMP biosynthesis via de novo pathway; IMP from 5-formamido-1-(5-phospho-D-ribosyl)imidazole-4-carboxamide: step 1/1. In Thermosynechococcus vestitus (strain NIES-2133 / IAM M-273 / BP-1), this protein is Bifunctional purine biosynthesis protein PurH.